Here is a 443-residue protein sequence, read N- to C-terminus: Tubulin beta chain (443 aa).

Glutamine 11, glutamate 69, serine 138, glycine 142, threonine 143, glycine 144, asparagine 204, and asparagine 226 together coordinate GTP. Glutamate 69 serves as a coordination point for Mg(2+). Positions 424 to 443 (QYQDASAEEEGEFEGEEEEA) are disordered. Acidic residues predominate over residues 429–443 (SAEEEGEFEGEEEEA).

This sequence belongs to the tubulin family. In terms of assembly, dimer of alpha and beta chains. A typical microtubule is a hollow water-filled tube with an outer diameter of 25 nm and an inner diameter of 15 nM. Alpha-beta heterodimers associate head-to-tail to form protofilaments running lengthwise along the microtubule wall with the beta-tubulin subunit facing the microtubule plus end conferring a structural polarity. Microtubules usually have 13 protofilaments but different protofilament numbers can be found in some organisms and specialized cells. Mg(2+) is required as a cofactor.

It localises to the cytoplasm. The protein localises to the cytoskeleton. In terms of biological role, tubulin is the major constituent of microtubules, a cylinder consisting of laterally associated linear protofilaments composed of alpha- and beta-tubulin heterodimers. Microtubules grow by the addition of GTP-tubulin dimers to the microtubule end, where a stabilizing cap forms. Below the cap, tubulin dimers are in GDP-bound state, owing to GTPase activity of alpha-tubulin. This chain is Tubulin beta chain (TUBB), found in Chlamydomonas incerta.